The sequence spans 128 residues: Large ribosomal subunit protein eL8 (128 aa).

Belongs to the eukaryotic ribosomal protein eL8 family. Part of the 50S ribosomal subunit. Probably part of the RNase P complex.

The protein resides in the cytoplasm. Functionally, multifunctional RNA-binding protein that recognizes the K-turn motif in ribosomal RNA, the RNA component of RNase P, box H/ACA, box C/D and box C'/D' sRNAs. The protein is Large ribosomal subunit protein eL8 of Ignicoccus hospitalis (strain KIN4/I / DSM 18386 / JCM 14125).